The chain runs to 567 residues: Wee1-like protein kinase 2 (567 aa).

Basic and acidic residues-rich tracts occupy residues 1 to 12 and 26 to 36; these read MDDSSINKELKQ and EGQKEAPESRE. 2 disordered regions span residues 1–103 and 170–191; these read MDDS…DSRS and RSNG…EGKV. S77 is subject to Phosphoserine. Residues 174–176 carry the Nuclear localization signal motif; sequence KRK. The Protein kinase domain maps to 215–494; that stretch reads FLEVEKIGVG…ARSRVLRPSL (280 aa). ATP-binding positions include 221-229 and K244; that span reads IGVGEFGTV. The Nuclear export signal motif lies at 318–332; that stretch reads KLKDILLQISLGLKY. The active-site Proton acceptor is D342. Mg(2+) is bound by residues N347 and D384. The stretch at 497 to 523 forms a coiled coil; that stretch reads AEELQQQLNLEKSKTATLERELREAQQ. Residues 502–567 form a disordered region; that stretch reads QQLNLEKSKT…SSFTCGKSSP (66 aa). Residues 507–520 are compositionally biased toward basic and acidic residues; the sequence is EKSKTATLERELRE. Polar residues predominate over residues 555 to 567; sequence AKSSSFTCGKSSP.

It belongs to the protein kinase superfamily. Ser/Thr protein kinase family. WEE1 subfamily. In terms of processing, phosphorylation leads to increase its activity.

It is found in the nucleus. The catalysed reaction is L-tyrosyl-[protein] + ATP = O-phospho-L-tyrosyl-[protein] + ADP + H(+). Its function is as follows. Oocyte-specific protein tyrosine kinase that phosphorylates and inhibits CDK1 and acts as a key regulator of meiosis during both prophase I and metaphase II. Required to maintain meiotic arrest in oocytes during the germinal vesicle (GV) stage, a long period of quiescence at dictyate prophase I, by phosphorylating CDK1 at 'Tyr-15', leading to inhibit CDK1 activity and prevent meiotic reentry. Also required for metaphase II exit during egg activation by phosphorylating CDK1 at 'Tyr-15', to ensure exit from meiosis in oocytes and promote pronuclear formation. The protein is Wee1-like protein kinase 2 (WEE2) of Canis lupus familiaris (Dog).